The following is a 361-amino-acid chain: tRNA-specific 2-thiouridylase MnmA (361 aa).

ATP-binding positions include 11 to 18 (GMSGGVDS) and Met37. Catalysis depends on Cys106, which acts as the Nucleophile. The cysteines at positions 106 and 202 are disulfide-linked. Residue Gly130 coordinates ATP. The interval 152 to 154 (KDQ) is interaction with tRNA. Cys202 (cysteine persulfide intermediate) is an active-site residue. The segment at 308–309 (RY) is interaction with tRNA.

This sequence belongs to the MnmA/TRMU family.

It localises to the cytoplasm. It carries out the reaction S-sulfanyl-L-cysteinyl-[protein] + uridine(34) in tRNA + AH2 + ATP = 2-thiouridine(34) in tRNA + L-cysteinyl-[protein] + A + AMP + diphosphate + H(+). Functionally, catalyzes the 2-thiolation of uridine at the wobble position (U34) of tRNA, leading to the formation of s(2)U34. The sequence is that of tRNA-specific 2-thiouridylase MnmA from Clostridium botulinum (strain Alaska E43 / Type E3).